The primary structure comprises 100 residues: Omega-hexatoxin-Asp2a (100 aa).

Residues 1-23 (MKFSKLSITLAVILTQAVFVLCG) form the signal peptide. Positions 24-55 (MKNEDFMEKGLESNELHDAIKKPVNSGKPDTE) are excised as a propeptide. 3 disulfides stabilise this stretch: cysteine 60–cysteine 73, cysteine 66–cysteine 79, and cysteine 72–cysteine 84.

This sequence belongs to the neurotoxin 15 family. 02 (omega-actx) subfamily. Expressed by the venom gland.

The protein localises to the secreted. Functionally, potent inhibitor of insect, but not mammalian, voltage-gated calcium channels (Cav). The sequence is that of Omega-hexatoxin-Asp2a from Atrax sp. (strain Illawarra) (Funnel-web spider).